Reading from the N-terminus, the 78-residue chain is Large ribosomal subunit protein bL28 (78 aa).

This sequence belongs to the bacterial ribosomal protein bL28 family.

In Gloeothece citriformis (strain PCC 7424) (Cyanothece sp. (strain PCC 7424)), this protein is Large ribosomal subunit protein bL28.